Consider the following 248-residue polypeptide: DNA repair protein RecO (248 aa).

The protein belongs to the RecO family.

Its function is as follows. Involved in DNA repair and RecF pathway recombination. The sequence is that of DNA repair protein RecO from Bacillus mycoides (strain KBAB4) (Bacillus weihenstephanensis).